We begin with the raw amino-acid sequence, 262 residues long: Acyl-[acyl-carrier-protein]--UDP-N-acetylglucosamine O-acyltransferase (262 aa).

Belongs to the transferase hexapeptide repeat family. LpxA subfamily. Homotrimer.

The protein resides in the cytoplasm. The catalysed reaction is a (3R)-hydroxyacyl-[ACP] + UDP-N-acetyl-alpha-D-glucosamine = a UDP-3-O-[(3R)-3-hydroxyacyl]-N-acetyl-alpha-D-glucosamine + holo-[ACP]. Its pathway is glycolipid biosynthesis; lipid IV(A) biosynthesis; lipid IV(A) from (3R)-3-hydroxytetradecanoyl-[acyl-carrier-protein] and UDP-N-acetyl-alpha-D-glucosamine: step 1/6. Involved in the biosynthesis of lipid A, a phosphorylated glycolipid that anchors the lipopolysaccharide to the outer membrane of the cell. This chain is Acyl-[acyl-carrier-protein]--UDP-N-acetylglucosamine O-acyltransferase, found in Salmonella arizonae (strain ATCC BAA-731 / CDC346-86 / RSK2980).